The sequence spans 344 residues: Sulfate/thiosulfate import ATP-binding protein CysA (344 aa).

In terms of domain architecture, ABC transporter spans 3–233 (ILIDNVSKNF…PESAFVMSFL (231 aa)). 35–42 (GPSGCGKS) provides a ligand contact to ATP.

It belongs to the ABC transporter superfamily. Sulfate/tungstate importer (TC 3.A.1.6) family. The complex is composed of two ATP-binding proteins (CysA), two transmembrane proteins (CysT and CysW) and a solute-binding protein (CysP).

The protein resides in the cell inner membrane. The catalysed reaction is sulfate(out) + ATP + H2O = sulfate(in) + ADP + phosphate + H(+). It catalyses the reaction thiosulfate(out) + ATP + H2O = thiosulfate(in) + ADP + phosphate + H(+). Part of the ABC transporter complex CysAWTP involved in sulfate/thiosulfate import. Responsible for energy coupling to the transport system. The chain is Sulfate/thiosulfate import ATP-binding protein CysA from Gloeobacter violaceus (strain ATCC 29082 / PCC 7421).